A 581-amino-acid polypeptide reads, in one-letter code: Guanine nucleotide-binding protein-like 3 homolog (581 aa).

A compositionally biased stretch (basic residues) spans 1–49 (MALKRLKTKKSKRLTGRLKHKIEKKVRDHNKKERRAAKKNPKKGSKKQK). Positions 1–50 (MALKRLKTKKSKRLTGRLKHKIEKKVRDHNKKERRAAKKNPKKGSKKQKL) are disordered. Residues 64–108 (LKEVEEAKQRQEAERLARREAFKAEREQNKFKTLESMVEDADMRS) are a coiled coil. The residue at position 99 (S99) is a Phosphoserine. Positions 141 to 325 (FKEFRKVIEN…LIDCPGIVFT (185 aa)) constitute a CP-type G domain. GTP-binding positions include 189 to 192 (NKAD), 274 to 281 (GIPNVGKS), and 318 to 321 (DCPG). Basic and acidic residues predominate over residues 500–517 (KPAKGRKRKLDEEKEKVD). The segment at 500 to 519 (KPAKGRKRKLDEEKEKVDPS) is disordered.

This sequence belongs to the TRAFAC class YlqF/YawG GTPase family.

Its subcellular location is the nucleus. It localises to the nucleolus. Its function is as follows. May play a role in regulating cellular proliferation. The chain is Guanine nucleotide-binding protein-like 3 homolog (Ns1) from Drosophila melanogaster (Fruit fly).